A 192-amino-acid polypeptide reads, in one-letter code: Phosphoheptose isomerase (192 aa).

An SIS domain is found at Leu34 to Arg192. A substrate-binding site is contributed by Asn49–Gly51. Residues His58 and Glu62 each coordinate Zn(2+). Residues Glu62, Asn91–Asp92, Ser117–Ser119, Ser122, and Gln169 contribute to the substrate site. Zn(2+)-binding residues include Gln169 and His177.

The protein belongs to the SIS family. GmhA subfamily. In terms of assembly, homotetramer. The cofactor is Zn(2+).

It localises to the cytoplasm. The enzyme catalyses 2 D-sedoheptulose 7-phosphate = D-glycero-alpha-D-manno-heptose 7-phosphate + D-glycero-beta-D-manno-heptose 7-phosphate. It functions in the pathway carbohydrate biosynthesis; D-glycero-D-manno-heptose 7-phosphate biosynthesis; D-glycero-alpha-D-manno-heptose 7-phosphate and D-glycero-beta-D-manno-heptose 7-phosphate from sedoheptulose 7-phosphate: step 1/1. Its function is as follows. Catalyzes the isomerization of sedoheptulose 7-phosphate in D-glycero-D-manno-heptose 7-phosphate. The polypeptide is Phosphoheptose isomerase (Geotalea daltonii (strain DSM 22248 / JCM 15807 / FRC-32) (Geobacter daltonii)).